We begin with the raw amino-acid sequence, 263 residues long: HTH-type transcriptional repressor NanR (263 aa).

The segment at 1-22 is disordered; that stretch reads MGLMNAFDSQTEDSSPAIGRNL. The region spanning 30–98 is the HTH gntR-type domain; sequence KKLSEMVEEE…NGERARVSRP (69 aa). The H-T-H motif DNA-binding region spans 58-77; sequence ERELMAFFNVGRPSVREALA.

The protein belongs to the NanR family.

Functionally, transcriptional repressor that controls expression of the genes required for the catabolism of sialic acids. This is HTH-type transcriptional repressor NanR from Shigella boydii serotype 4 (strain Sb227).